The following is a 453-amino-acid chain: Alpha-glucosidase (453 aa).

Position 3-69 (Thr3–Asp69) interacts with NAD(+). Asn149 serves as a coordination point for substrate. Mn(2+) is bound at residue Cys171. The active-site Proton donor is the His172. Residue His201 participates in Mn(2+) binding.

In terms of assembly, homotetramer. The cofactor is Mn(2+). Co(2+) is required as a cofactor. Ca(2+) serves as cofactor. It depends on Fe(2+) as a cofactor. Requires Mg(2+) as cofactor. The cofactor is Sr(2+). Ni(2+) is required as a cofactor. NAD(+) serves as cofactor.

It carries out the reaction Hydrolysis of terminal, non-reducing (1-&gt;4)-linked alpha-D-glucose residues with release of alpha-D-glucose.. The protein operates within glycan degradation; palatinose degradation. Its activity is regulated as follows. Is inhibited by EDTA in vitro. Functionally, alpha-glucosidase with broad specificity. Hydrolyzes maltose, palatinose, maltulose, trehalose, trehalulose, turanose, leucrose, sucrose and maltitol. Is not active against alpha-galactosides, e.g. melibiose, and alpha-mannosides. Shows an obligate requirement for an O-alpha-glycosidic linkage, since it is not able to cleave beta-glycosidic bonds (cellobiose, gentiobiose, lactose, sophorose or laminaribiose). Cannot hydrolyze phosphorylated alpha-glucosides derivatives. Seems to be involved in the degradation of palatinose, a sucrose isomer that is formed as a reserve material under conditions of excess carbon availability, sequestered in a form unavailable to competitors such as fungi or the host plant, and whose consumption appears to be postponed until the preferentially metabolized carbon source (e.g. sucrose) is depleted. The sequence is that of Alpha-glucosidase (palH) from Erwinia rhapontici (Pectobacterium rhapontici).